Here is a 392-residue protein sequence, read N- to C-terminus: Acetyl-CoA acetyltransferase (392 aa).

The Acyl-thioester intermediate role is filled by Cys-85. Positions 206, 207, 209, and 332 each coordinate CoA. His-336 (proton acceptor) is an active-site residue.

It belongs to the thiolase-like superfamily. Thiolase family. As to quaternary structure, interacts with HMG-CoA synthase (HMGCS) that catalyzes the second step in the pathway and with a DUF35 protein. The acetoacetyl-CoA thiolase/HMG-CoA synthase complex channels the intermediate via a fused CoA-binding site, which allows for efficient coupling of the endergonic thiolase reaction with the exergonic HMGCS reaction.

It catalyses the reaction 2 acetyl-CoA = acetoacetyl-CoA + CoA. Its pathway is metabolic intermediate biosynthesis; (R)-mevalonate biosynthesis; (R)-mevalonate from acetyl-CoA: step 1/3. Functionally, catalyzes the condensation of two acetyl-coA molecules into acetoacetyl-CoA. Functions in the mevalonate (MVA) pathway leading to isopentenyl diphosphate (IPP), a key precursor for the biosynthesis of isoprenoid compounds that are building blocks of archaeal membrane lipids. In Methanothermococcus thermolithotrophicus (Methanococcus thermolithotrophicus), this protein is Acetyl-CoA acetyltransferase.